The chain runs to 379 residues: Cytoplasmic tRNA 2-thiolation protein 1 (379 aa).

It belongs to the TtcA family. CTU1/NCS6/ATPBD3 subfamily.

It localises to the cytoplasm. The protein operates within tRNA modification; 5-methoxycarbonylmethyl-2-thiouridine-tRNA biosynthesis. In terms of biological role, plays a central role in 2-thiolation of mcm(5)S(2)U at tRNA wobble positions of tRNA(Lys), tRNA(Glu) and tRNA(Gln). Directly binds tRNAs and probably acts by catalyzing adenylation of tRNAs, an intermediate required for 2-thiolation. It is unclear whether it acts as a sulfurtransferase that transfers sulfur from thiocarboxylated URM1 onto the uridine of tRNAs at wobble position. Prior mcm(5) tRNA modification by the elongator complex is required for 2-thiolation. May also be involved in protein urmylation. The polypeptide is Cytoplasmic tRNA 2-thiolation protein 1 (Lodderomyces elongisporus (strain ATCC 11503 / CBS 2605 / JCM 1781 / NBRC 1676 / NRRL YB-4239) (Yeast)).